Consider the following 503-residue polypeptide: 11-hydroxysugiol 20-monooxygenase (503 aa).

Residues 2–22 form a helical membrane-spanning segment; sequence QVLIVASLAFLAAWLVYSRWS. Residue cysteine 446 coordinates heme.

The protein belongs to the cytochrome P450 family. Heme serves as cofactor. As to expression, highly expressed in roots.

It localises to the membrane. It catalyses the reaction 11-hydroxysugiol + reduced [NADPH--hemoprotein reductase] + O2 = 11,20-dihydroxysugiol + oxidized [NADPH--hemoprotein reductase] + H2O + H(+). It carries out the reaction 11-hydroxyferruginol + reduced [NADPH--hemoprotein reductase] + O2 = 11,20-dihydroxyferruginol + oxidized [NADPH--hemoprotein reductase] + H2O + H(+). It functions in the pathway secondary metabolite biosynthesis; terpenoid biosynthesis. Monooxygenase that oxidizes 11-hydroxysugiol to produce 11,20-dihydroxysugiol. Can oxidize 11-hydroxyferruginol to produce 11,20-dihydroxyferruginol. These products are intermediates in tanshinone biosynthesis. The polypeptide is 11-hydroxysugiol 20-monooxygenase (Salvia miltiorrhiza (Chinese sage)).